A 169-amino-acid chain; its full sequence is Cell division inhibitor SulA (169 aa).

The ftsZ binding stretch occupies residues 106-112 (ALRTGNY). The tract at residues 162 to 169 (KIHSNLYH) is lon protease binding.

It belongs to the SulA family. In terms of assembly, interacts with FtsZ. Post-translationally, is rapidly cleaved and degraded by the Lon protease once DNA damage is repaired.

Component of the SOS system and an inhibitor of cell division. Accumulation of SulA causes rapid cessation of cell division and the appearance of long, non-septate filaments. In the presence of GTP, binds a polymerization-competent form of FtsZ in a 1:1 ratio, thus inhibiting FtsZ polymerization and therefore preventing it from participating in the assembly of the Z ring. This mechanism prevents the premature segregation of damaged DNA to daughter cells during cell division. In Escherichia coli O7:K1 (strain IAI39 / ExPEC), this protein is Cell division inhibitor SulA.